Reading from the N-terminus, the 282-residue chain is HTH-type transcriptional activator RhaR (282 aa).

Residues 179-277 (DKLITALANS…GMTPSQWRHL (99 aa)) enclose the HTH araC/xylS-type domain. 2 DNA-binding regions (H-T-H motif) span residues 196–217 (DAFC…RAQT) and 244–267 (ISEI…TRET).

In terms of assembly, binds DNA as a dimer.

It is found in the cytoplasm. Functionally, activates expression of the rhaSR operon in response to L-rhamnose. The chain is HTH-type transcriptional activator RhaR from Salmonella agona (strain SL483).